Reading from the N-terminus, the 288-residue chain is Transposase for insertion sequence element IS1106 (288 aa).

Belongs to the transposase 11 family.

Functionally, involved in the transposition of the insertion sequence. The sequence is that of Transposase for insertion sequence element IS1106 from Neisseria meningitidis serogroup B.